A 470-amino-acid chain; its full sequence is Poly(A) polymerase catalytic subunit (470 aa).

Catalysis depends on residues Asp-192 and Asp-194.

It belongs to the poxviridae poly(A) polymerase catalytic subunit family. Heterodimer of a large (catalytic) subunit and a small (regulatory) subunit.

It catalyses the reaction RNA(n) + ATP = RNA(n)-3'-adenine ribonucleotide + diphosphate. Functionally, polymerase that creates the 3'-poly(A) tail of mRNA's. This chain is Poly(A) polymerase catalytic subunit (PAPL), found in Sus scrofa (Pig).